We begin with the raw amino-acid sequence, 767 residues long: Serine/threonine-protein kinase DCLK2 (767 aa).

The disordered stretch occupies residues 1–44 (MASTRSIELEHFEERDKRPRPGSRRGAPSSSGGSSISGPKGNGL). Residues 7–19 (IELEHFEERDKRP) are compositionally biased toward basic and acidic residues. Over residues 24–43 (RRGAPSSSGGSSISGPKGNG) the composition is skewed to low complexity. Phosphothreonine is present on T61. 2 Doublecortin domains span residues 72 to 158 (KKAR…VDYT) and 196 to 279 (KLVT…AQDD). Low complexity predominate over residues 301-311 (KYSGSRSPGLS). The tract at residues 301 to 391 (KYSGSRSPGL…GPELDRCMSP (91 aa)) is disordered. Over residues 327-338 (SAYSTAKSPVNG) the composition is skewed to polar residues. The span at 339–362 (TPSSQLSTPKSTKSSSSSPTSPGS) shows a compositional bias: low complexity. The segment covering 369–380 (ISAQGRSSSNVN) has biased composition (polar residues). S377 carries the post-translational modification Phosphoserine. The Protein kinase domain occupies 409–666 (YRIGKVIGDG…AGEILSHPWV (258 aa)). ATP-binding positions include 415 to 423 (IGDGNFAVV) and K438. The active-site Proton acceptor is D530. Residue S662 is modified to Phosphoserine. T681 carries the post-translational modification Phosphothreonine. Residues 721-734 (HCRDSSKSSREQTS) show a composition bias toward basic and acidic residues. The segment at 721–767 (HCRDSSKSSREQTSAREAPPPPESPRPPGPPATSGCDPAGTWRRHRD) is disordered. Pro residues predominate over residues 738–751 (APPPPESPRPPGPP).

It belongs to the protein kinase superfamily. CAMK Ser/Thr protein kinase family. CaMK subfamily. In terms of assembly, interacts with MAPK8IP1/JIP-1, MAPK8IP2/JIP-2, MAPK9/JNK2, PPP1R9B/NEURABIN-2 and actin. Binds to and stabilizes microtubules; binding affinity is strongly reduced by autophosphorylation. Autophosphorylated.

The protein localises to the cytoplasm. It localises to the cytoskeleton. It catalyses the reaction L-seryl-[protein] + ATP = O-phospho-L-seryl-[protein] + ADP + H(+). It carries out the reaction L-threonyl-[protein] + ATP = O-phospho-L-threonyl-[protein] + ADP + H(+). Functionally, protein kinase with a significantly reduced Ca(2+)+/CAM affinity and dependence compared to other members of the CaMK family. May play a role in the down-regulation of CRE-dependent gene activation probably by phosphorylation of the CREB coactivator CRTC2/TORC2 and the resulting retention of TORC2 in the cytoplasm. This chain is Serine/threonine-protein kinase DCLK2 (Dclk2), found in Rattus norvegicus (Rat).